The primary structure comprises 197 residues: RNA-binding protein Rsf1 (197 aa).

The RRM domain occupies threonine 7–glycine 80. A disordered region spans residues arginine 74–phenylalanine 197. Residues glycine 89 to arginine 102 show a composition bias toward basic and acidic residues. Threonine 106 carries the post-translational modification Phosphothreonine. Low complexity-rich tracts occupy residues glutamine 117–glycine 144 and arginine 166–glycine 176. Serine 168, serine 171, serine 174, serine 188, and serine 190 each carry phosphoserine.

This sequence belongs to the splicing factor SR family. Post-translationally, extensively phosphorylated on serine residues in the RS domain.

The protein localises to the nucleus. Its function is as follows. May control important aspects of development. This Drosophila melanogaster (Fruit fly) protein is RNA-binding protein Rsf1 (Rsf1).